A 229-amino-acid polypeptide reads, in one-letter code: Aldehyde oxidoreductase iron-sulfur-binding subunit PaoA (229 aa).

Residues 1–21 (MSNQGEYPEDNRVGKHEPHDL) are disordered. The tat-type signal signal peptide spans 1-53 (MSNQGEYPEDNRVGKHEPHDLSLTRRDLIKVSAATAAAAVVYPHSTLAASVPA). The span at 9–21 (EDNRVGKHEPHDL) shows a compositional bias: basic and acidic residues. One can recognise a 2Fe-2S ferredoxin-type domain in the interval 61–137 (MPLTLKVNGK…GAEITTIEGL (77 aa)). The [2Fe-2S] cluster site is built by Cys-99, Cys-104, Gly-105, Cys-107, Cys-119, Cys-158, Cys-161, Cys-208, and Cys-210.

Heterotrimer composed of PaoA, PaoB and PaoC. [2Fe-2S] cluster is required as a cofactor. In terms of processing, exported by the Tat system. The position of the signal peptide cleavage has not been experimentally proven.

It localises to the periplasm. It catalyses the reaction an aldehyde + A + H2O = a carboxylate + AH2 + H(+). Functionally, oxidizes aldehydes to the corresponding carboxylic acids with a preference for aromatic aldehydes. It might play a role in the detoxification of aldehydes to avoid cell damage. The protein is Aldehyde oxidoreductase iron-sulfur-binding subunit PaoA of Escherichia coli O157:H7.